The following is a 457-amino-acid chain: MALWGGRFTQAADKRFKDFNDSLRFDYRLAEQDIQGSIGWSKALVKVNVLTIEEQHQLEQALNELLVEVRSNPQAILQDDAEDIHSWVESKLIDKVGNLGKKLHTGRSRNDQVAVDIKLWCKQRVIELQESVRNLQRHLVQTAENTQQAVMPGYTHLQRAQPITFAHWCMAYVEMFDRDYSRLTDAYNRMNTCPLGSGALAGTAYAVDRDSLAHDLSFAFATRNSLDSVSDRDHIVELLSIASLSMAHLSRFAEDMIIFNSGEANFVELSDRVTSGSSLMPQKKNPDACELIRGKTGRVIGSLTSMLITLKGLPLAYNKDMQEDKEGIFDALDTWQNCVDMATFVLDELKVNVERTREAALKGYSNATELADYLVSKGVPFRDSHHIVGETVVYAIEKGKGLEDLTIPEFRQFSEVVGDDVYEILSLQSCLDKRCAKGGVSPLRVAEAIAEAKTRFA.

The protein belongs to the lyase 1 family. Argininosuccinate lyase subfamily.

The protein resides in the cytoplasm. The enzyme catalyses 2-(N(omega)-L-arginino)succinate = fumarate + L-arginine. It participates in amino-acid biosynthesis; L-arginine biosynthesis; L-arginine from L-ornithine and carbamoyl phosphate: step 3/3. The chain is Argininosuccinate lyase from Haemophilus influenzae (strain ATCC 51907 / DSM 11121 / KW20 / Rd).